The primary structure comprises 246 residues: 1-(5-phosphoribosyl)-5-[(5-phosphoribosylamino)methylideneamino] imidazole-4-carboxamide isomerase (246 aa).

Residue D12 is the Proton acceptor of the active site. D134 acts as the Proton donor in catalysis.

It belongs to the HisA/HisF family.

The protein resides in the cytoplasm. The enzyme catalyses 1-(5-phospho-beta-D-ribosyl)-5-[(5-phospho-beta-D-ribosylamino)methylideneamino]imidazole-4-carboxamide = 5-[(5-phospho-1-deoxy-D-ribulos-1-ylimino)methylamino]-1-(5-phospho-beta-D-ribosyl)imidazole-4-carboxamide. It functions in the pathway amino-acid biosynthesis; L-histidine biosynthesis; L-histidine from 5-phospho-alpha-D-ribose 1-diphosphate: step 4/9. The chain is 1-(5-phosphoribosyl)-5-[(5-phosphoribosylamino)methylideneamino] imidazole-4-carboxamide isomerase from Psychrobacter cryohalolentis (strain ATCC BAA-1226 / DSM 17306 / VKM B-2378 / K5).